Reading from the N-terminus, the 372-residue chain is 3-galactosyl-N-acetylglucosaminide 4-alpha-L-fucosyltransferase FUT3 (372 aa).

At 1 to 15 the chain is on the cytoplasmic side; sequence MDPLGAAKTQWPWRR. A helical; Signal-anchor for type II membrane protein transmembrane segment spans residues 16–34; sequence CLAALLFQLLVAVCFFSYL. The Lumenal segment spans residues 35–372; sequence RVSRDDATGS…MVRSIAAWFT (338 aa). A disordered region spans residues 40-68; the sequence is DATGSPRPGLMAVEPVTGAPGGSSRQDTT. Residues N165 and N196 are each glycosylated (N-linked (GlcNAc...) asparagine).

This sequence belongs to the glycosyltransferase 10 family. In terms of processing, glycosylated.

It is found in the golgi apparatus. The protein resides in the golgi stack membrane. The enzyme catalyses a beta-D-galactosyl-(1-&gt;3)-N-acetyl-beta-D-glucosaminyl derivative + GDP-beta-L-fucose = a beta-D-galactosyl-(1-&gt;3)-[alpha-L-fucosyl-(1-&gt;4)]-N-acetyl-beta-D-glucosaminyl derivative + GDP + H(+). It carries out the reaction an N-acetyl-alpha-neuraminyl-(2-&gt;3)-beta-D-galactosyl-(1-&gt;4)-N-acetyl-beta-D-glucosaminyl derivative + GDP-beta-L-fucose = an alpha-Neu5Ac-(2-&gt;3)-beta-D-Gal-(1-&gt;4)-[alpha-L-Fuc-(1-&gt;3)]-beta-D-GlcNAc derivative + GDP + H(+). The catalysed reaction is a beta-D-galactosyl-(1-&gt;4)-N-acetyl-beta-D-glucosaminyl derivative + GDP-beta-L-fucose = a beta-D-galactosyl-(1-&gt;4)-[alpha-L-fucosyl-(1-&gt;3)]-N-acetyl-beta-D-glucosaminyl derivative + GDP + H(+). It catalyses the reaction an alpha-Neu5Ac-(2-&gt;3)-beta-D-Gal-(1-&gt;4)-beta-D-GlcNAc-(1-&gt;3)-beta-D-Gal-(1-&gt;4)-[alpha-L-Fuc-(1-&gt;3)]-beta-D-GlcNAc derivative + GDP-beta-L-fucose = an alpha-Neu5Ac-(2-&gt;3)-beta-D-Gal-(1-&gt;4)-[alpha-L-Fuc-(1-&gt;3)]-beta-D-GlcNAc-(1-&gt;3)-beta-D-Gal-(1-&gt;4)-[alpha-L-Fuc-(1-&gt;3)]-beta-D-GlcNAc derivative + GDP + H(+). The enzyme catalyses Lc4Cer + GDP-beta-L-fucose = a lactoside III(4)-a-Fuc-Lc4Cer + GDP + H(+). It carries out the reaction a beta-D-Gal-(1-&gt;3)-beta-D-GlcNAc-(1-&gt;3)-beta-D-Gal-(1-&gt;4)-beta-D-Glc-(1&lt;-&gt;1')-Cer(d18:1(4E)) + GDP-beta-L-fucose = a III(4)-a-Fuc-Lc4Cer(d18:1(4E)) + GDP + H(+). The catalysed reaction is N-acetyl-alpha-neuraminosyl-(2-&gt;3)-beta-D-galactosyl-(1-&gt;3)-[N-acetyl-alpha-neuraminosyl-(2-&gt;6)]-N-acetyl-beta-D-glucosaminyl-(1-&gt;3)-beta-D-galactosyl-(1-&gt;4)-beta-D-glucosyl-(1&lt;-&gt;1')-N-acyl-sphing-4-enine + GDP-beta-L-fucose = N-acetyl-alpha-neuraminosyl-(2-&gt;3)-beta-D-galactosyl-(1-&gt;3)-alpha-L-fucosyl-(1-&gt;4)-[N-acetyl-alpha-neuraminosyl-(2-&gt;6)-N-acetyl-beta-D-glucosaminyl-(1-&gt;3)]-beta-D-galactosyl-(1-&gt;4)-beta-D-glucosyl-(1&lt;-&gt;1')-N-acyl-sphing-4-enine + GDP + H(+). It catalyses the reaction N-acetyl-alpha-neuraminosyl-(2-&gt;3)-beta-D-galactosyl-(1-&gt;3)-N-acetyl-beta-D-glucosaminyl-(1-&gt;3)-beta-D-galactosyl-(1-&gt;4)-beta-D-glucosyl-(1&lt;-&gt;1')-N-acyl-sphing-4-enine + GDP-beta-L-fucose = N-acetyl-alpha-neuraminosyl-(2-&gt;3)-beta-D-galactosyl-(1-&gt;3)-alpha-L-fucosyl-(1-&gt;4)-[N-acetyl-beta-D-glucosaminyl-(1-&gt;3)]-beta-D-galactosyl-(1-&gt;4)-beta-D-glucosyl-(1&lt;-&gt;1')-N-acyl-sphing-4-enine + GDP + H(+). The enzyme catalyses beta-D-galactosyl-(1-&gt;3)-N-acetyl-D-glucosamine + GDP-beta-L-fucose = beta-D-galactosyl-(1-&gt;3)-[alpha-L-fucosyl-(1-&gt;4)]-N-acetyl-D-glucosamine + GDP + H(+). It carries out the reaction alpha-L-Fuc-(1-&gt;2)-beta-D-Gal-(1-&gt;3)-D-GlcNAc + GDP-beta-L-fucose = alpha-L-Fuc-(1-&gt;2)-beta-D-Gal-(1-&gt;3)-[alpha-L-Fuc-(1-&gt;4)]-D-GlcNAc + GDP + H(+). The catalysed reaction is alpha-L-Fuc-(1-&gt;2)-beta-D-Gal-(1-&gt;4)-D-GlcNAc + GDP-beta-L-fucose = alpha-L-Fuc-(1-&gt;2)-beta-D-Gal-(1-&gt;4)-[alpha-L-Fuc-(1-&gt;3)]-D-GlcNAc + GDP + H(+). It catalyses the reaction beta-D-galactosyl-(1-&gt;4)-N-acetyl-D-glucosamine + GDP-beta-L-fucose = beta-D-galactosyl-(1-&gt;4)-[alpha-L-fucosyl-(1-&gt;3)]-N-acetyl-D-glucosamine + GDP + H(+). The enzyme catalyses lactose + GDP-beta-L-fucose = beta-D-galactosyl-(1-&gt;4)-[alpha-L-fucosyl-(1-&gt;3)]-D-glucose + GDP + H(+). It carries out the reaction an alpha-Neu5Ac-(2-&gt;3)-beta-D-Gal-(1-&gt;3)-D-GlcNAc derivative + GDP-beta-L-fucose = an alpha-Neu5Ac-(2-&gt;3)-beta-D-Gal-(1-&gt;3)-[alpha-L-Fuc-(1-&gt;4)]-beta-D-GlcNAc derivative + GDP + H(+). Its pathway is protein modification; protein glycosylation. Catalyzes the transfer of L-fucose, from a guanosine diphosphate-beta-L-fucose, to both the subterminal N-acetyl glucosamine (GlcNAc) of type 1 chain (beta-D-Gal-(1-&gt;3)-beta-D-GlcNAc) glycolipids and oligosaccharides via an alpha(1,4) linkage, and the subterminal glucose (Glc) or GlcNAc of type 2 chain (beta-D-Gal-(1-&gt;4)-beta-D-GlcNAc) oligosaccharides via an alpha(1,3) linkage, independently of the presence of terminal alpha-L-fucosyl-(1,2) moieties on the terminal galactose of these acceptors and participates in the blood groups Lewis determination and expression of Lewis a (Le(a)), lewis b (Le(b)), Lewis x/SSEA-1 (Le(x)) and lewis y (Le(y)) antigens. Also catalyzes the transfer of L-fucose to subterminal GlcNAc of sialyl- and disialyl-lactotetraosylceramide to produce sialyl Lewis a (sLe(a)) and disialyl Lewis a via an alpha(1,4) linkage and therefore may regulate cell surface sialyl Lewis a expression and consequently regulates adhesive properties to E-selectin, cell proliferation and migration. Catalyzes the transfer of an L-fucose to 3'-sialyl-N-acetyllactosamine by an alpha(1,3) linkage, which allows the formation of sialyl-Lewis x structure and therefore may regulate the sialyl-Lewis x surface antigen expression and consequently adhesive properties to E-selectin. Prefers type 1 chain over type 2 acceptors. Type 1 tetrasaccharide is a better acceptor than type 1 disaccharide suggesting that a beta anomeric configuration of GlcNAc in the substrate is preferred. Lewis-positive (Le(+)) individuals have an active enzyme while Lewis-negative (Le(-)) individuals have an inactive enzyme. This is 3-galactosyl-N-acetylglucosaminide 4-alpha-L-fucosyltransferase FUT3 from Pongo pygmaeus (Bornean orangutan).